A 107-amino-acid chain; its full sequence is Homeobox protein HD-7 (107 aa).

Positions K21–N80 form a DNA-binding region, homeobox.

It localises to the nucleus. In Encephalitozoon cuniculi (strain GB-M1) (Microsporidian parasite), this protein is Homeobox protein HD-7 (HD-7).